The primary structure comprises 294 residues: 4-hydroxy-tetrahydrodipicolinate synthase (294 aa).

A pyruvate-binding site is contributed by threonine 47. The active-site Proton donor/acceptor is the tyrosine 136. Catalysis depends on lysine 164, which acts as the Schiff-base intermediate with substrate. Residue valine 206 coordinates pyruvate.

Belongs to the DapA family. In terms of assembly, homotetramer; dimer of dimers.

Its subcellular location is the cytoplasm. It catalyses the reaction L-aspartate 4-semialdehyde + pyruvate = (2S,4S)-4-hydroxy-2,3,4,5-tetrahydrodipicolinate + H2O + H(+). It functions in the pathway amino-acid biosynthesis; L-lysine biosynthesis via DAP pathway; (S)-tetrahydrodipicolinate from L-aspartate: step 3/4. Functionally, catalyzes the condensation of (S)-aspartate-beta-semialdehyde [(S)-ASA] and pyruvate to 4-hydroxy-tetrahydrodipicolinate (HTPA). This chain is 4-hydroxy-tetrahydrodipicolinate synthase, found in Acaryochloris marina (strain MBIC 11017).